A 179-amino-acid chain; its full sequence is NADH:FAD oxidoreductase (179 aa).

Position 48–51 (48–51 (TCSA)) interacts with FAD. 54 to 57 (SVCD) lines the NAD(+) pocket. Residues 65 to 71 (CINRKSY), A99, 104 to 109 (VPMEER), and S144 contribute to the FAD site. NAD(+) is bound by residues H145 and 166-169 (YHRR). An FAD-binding site is contributed by Y166.

This sequence belongs to the non-flavoprotein flavin reductase family. Homodimer. The chlorophenol-4-monooxygenase is composed of an oxygenase component TftD and a reductase component TftC.

It carries out the reaction FADH2 + NAD(+) = FAD + NADH + 2 H(+). The protein operates within xenobiotic degradation. Reductase component of a two-component system that degrades 2,4,5-trichlorophenol. TftC provides the FADH(2) required by TftD. TftD oxidizes 2,4,5-trichlorophenol (2,4,5-TCP) to 2,5-dichloro-p-benzoquinone, which is chemically reduced to 2,5-dichloro-p-hydroquinone (2,5-DiCHQ). Then, TftD oxidizes the latter to 5-chloro-2-hydroxy-p-benzoquinone. This chain is NADH:FAD oxidoreductase (tftC), found in Burkholderia cepacia (Pseudomonas cepacia).